The sequence spans 523 residues: GMP synthase [glutamine-hydrolyzing] (523 aa).

In terms of domain architecture, Glutamine amidotransferase type-1 spans 8-205 (KILILDFGSQ…VVKICGCERN (198 aa)). C85 functions as the Nucleophile in the catalytic mechanism. Active-site residues include H179 and E181. Residues 206–398 (WTPENIIEDA…LGLPAEMLNR (193 aa)) form the GMPS ATP-PPase domain. Residue 233-239 (SGGVDSS) participates in ATP binding.

Homodimer.

It carries out the reaction XMP + L-glutamine + ATP + H2O = GMP + L-glutamate + AMP + diphosphate + 2 H(+). It functions in the pathway purine metabolism; GMP biosynthesis; GMP from XMP (L-Gln route): step 1/1. Catalyzes the synthesis of GMP from XMP. This Pasteurella multocida (strain Pm70) protein is GMP synthase [glutamine-hydrolyzing].